Here is a 243-residue protein sequence, read N- to C-terminus: Ubiquinone/menaquinone biosynthesis C-methyltransferase UbiE (243 aa).

Residues Thr-69, Asp-90, and 116–117 (DA) each bind S-adenosyl-L-methionine.

Belongs to the class I-like SAM-binding methyltransferase superfamily. MenG/UbiE family.

The catalysed reaction is a 2-demethylmenaquinol + S-adenosyl-L-methionine = a menaquinol + S-adenosyl-L-homocysteine + H(+). It carries out the reaction a 2-methoxy-6-(all-trans-polyprenyl)benzene-1,4-diol + S-adenosyl-L-methionine = a 5-methoxy-2-methyl-3-(all-trans-polyprenyl)benzene-1,4-diol + S-adenosyl-L-homocysteine + H(+). It participates in quinol/quinone metabolism; menaquinone biosynthesis; menaquinol from 1,4-dihydroxy-2-naphthoate: step 2/2. It functions in the pathway cofactor biosynthesis; ubiquinone biosynthesis. Methyltransferase required for the conversion of demethylmenaquinol (DMKH2) to menaquinol (MKH2) and the conversion of 2-polyprenyl-6-methoxy-1,4-benzoquinol (DDMQH2) to 2-polyprenyl-3-methyl-6-methoxy-1,4-benzoquinol (DMQH2). This is Ubiquinone/menaquinone biosynthesis C-methyltransferase UbiE from Burkholderia multivorans (strain ATCC 17616 / 249).